Reading from the N-terminus, the 160-residue chain is Putative 4-hydroxy-4-methyl-2-oxoglutarate aldolase (160 aa).

Substrate contacts are provided by residues 75–78 (GDQL) and Arg97. Asp98 serves as a coordination point for a divalent metal cation.

This sequence belongs to the class II aldolase/RraA-like family. In terms of assembly, homotrimer. It depends on a divalent metal cation as a cofactor.

It carries out the reaction 4-hydroxy-4-methyl-2-oxoglutarate = 2 pyruvate. The enzyme catalyses oxaloacetate + H(+) = pyruvate + CO2. Its function is as follows. Catalyzes the aldol cleavage of 4-hydroxy-4-methyl-2-oxoglutarate (HMG) into 2 molecules of pyruvate. Also contains a secondary oxaloacetate (OAA) decarboxylase activity due to the common pyruvate enolate transition state formed following C-C bond cleavage in the retro-aldol and decarboxylation reactions. This is Putative 4-hydroxy-4-methyl-2-oxoglutarate aldolase from Vibrio parahaemolyticus serotype O3:K6 (strain RIMD 2210633).